Here is a 190-residue protein sequence, read N- to C-terminus: Elongation factor P 1 (190 aa).

This sequence belongs to the elongation factor P family.

The protein localises to the cytoplasm. It participates in protein biosynthesis; polypeptide chain elongation. In terms of biological role, involved in peptide bond synthesis. Stimulates efficient translation and peptide-bond synthesis on native or reconstituted 70S ribosomes in vitro. Probably functions indirectly by altering the affinity of the ribosome for aminoacyl-tRNA, thus increasing their reactivity as acceptors for peptidyl transferase. The chain is Elongation factor P 1 (efp1) from Lactobacillus johnsonii (strain CNCM I-12250 / La1 / NCC 533).